The chain runs to 258 residues: Elongation factor Ts (258 aa).

Residues 81 to 84 (TDFV) form an involved in Mg(2+) ion dislocation from EF-Tu region. Positions 216-258 (GLKPAEAPKVEETPPAPPEEPAPEPAPAAESKPAKKGSAKKKK) are disordered. Positions 229–241 (PPAPPEEPAPEPA) are enriched in pro residues. A compositionally biased stretch (basic residues) spans 249–258 (AKKGSAKKKK).

Belongs to the EF-Ts family.

The protein resides in the cytoplasm. Its function is as follows. Associates with the EF-Tu.GDP complex and induces the exchange of GDP to GTP. It remains bound to the aminoacyl-tRNA.EF-Tu.GTP complex up to the GTP hydrolysis stage on the ribosome. This is Elongation factor Ts from Synechococcus sp. (strain JA-2-3B'a(2-13)) (Cyanobacteria bacterium Yellowstone B-Prime).